A 539-amino-acid chain; its full sequence is CTP synthase (539 aa).

The interval 1–267 (MTKYIFVTGG…DQKVVDFLHI (267 aa)) is amidoligase domain. Ser-13 contacts CTP. Ser-13 is a binding site for UTP. ATP is bound at residue 14-19 (SLGKGI). Tyr-54 contributes to the L-glutamine binding site. ATP is bound at residue Asp-71. Residues Asp-71 and Glu-141 each coordinate Mg(2+). CTP-binding positions include 148–150 (DME), 188–193 (KSKPTQ), and Lys-224. UTP contacts are provided by residues 188–193 (KSKPTQ) and Lys-224. The region spanning 294–537 (KITLVGKYVE…IGAASGLQVD (244 aa)) is the Glutamine amidotransferase type-1 domain. Gly-356 contacts L-glutamine. Catalysis depends on Cys-383, which acts as the Nucleophile; for glutamine hydrolysis. Residues 384–387 (LGMQ), Glu-407, and Arg-465 contribute to the L-glutamine site. Catalysis depends on residues His-510 and Glu-512.

The protein belongs to the CTP synthase family. In terms of assembly, homotetramer.

It catalyses the reaction UTP + L-glutamine + ATP + H2O = CTP + L-glutamate + ADP + phosphate + 2 H(+). It carries out the reaction L-glutamine + H2O = L-glutamate + NH4(+). The enzyme catalyses UTP + NH4(+) + ATP = CTP + ADP + phosphate + 2 H(+). Its pathway is pyrimidine metabolism; CTP biosynthesis via de novo pathway; CTP from UDP: step 2/2. Its activity is regulated as follows. Allosterically activated by GTP, when glutamine is the substrate; GTP has no effect on the reaction when ammonia is the substrate. The allosteric effector GTP functions by stabilizing the protein conformation that binds the tetrahedral intermediate(s) formed during glutamine hydrolysis. Inhibited by the product CTP, via allosteric rather than competitive inhibition. In terms of biological role, catalyzes the ATP-dependent amination of UTP to CTP with either L-glutamine or ammonia as the source of nitrogen. Regulates intracellular CTP levels through interactions with the four ribonucleotide triphosphates. In Lactobacillus delbrueckii subsp. bulgaricus (strain ATCC 11842 / DSM 20081 / BCRC 10696 / JCM 1002 / NBRC 13953 / NCIMB 11778 / NCTC 12712 / WDCM 00102 / Lb 14), this protein is CTP synthase.